A 367-amino-acid chain; its full sequence is Probable butyrate kinase (367 aa).

The protein belongs to the acetokinase family.

The protein resides in the cytoplasm. The catalysed reaction is butanoate + ATP = butanoyl phosphate + ADP. The polypeptide is Probable butyrate kinase (Bacillus cereus (strain ATCC 14579 / DSM 31 / CCUG 7414 / JCM 2152 / NBRC 15305 / NCIMB 9373 / NCTC 2599 / NRRL B-3711)).